We begin with the raw amino-acid sequence, 736 residues long: Protein DSF2 (736 aa).

Polar residues predominate over residues 1-10; that stretch reads MNQNLKNTSW. Disordered stretches follow at residues 1-46, 178-208, 229-410, and 440-461; these read MNQN…DSQF, SGMKPQMNRNEKDYKYPNLENGNRSTNSPNP, ISDN…SGEN, and FKTASTPQSSTDKKKNSKARPN. Residues 14–24 show a composition bias toward basic and acidic residues; that stretch reads IGSDDQERKAN. Polar residues-rich tracts occupy residues 25–46 and 197–208; these read SSEVSQSPPPNNSFESSMDSQF and ENGNRSTNSPNP. A compositionally biased stretch (low complexity) spans 238-256; it reads NNANSKNNRTTSNNINTST. A compositionally biased stretch (polar residues) spans 264-284; sequence KQSCPNEFTTTQKSNCLYRNG. 3 stretches are compositionally biased toward low complexity: residues 285 to 294, 303 to 318, and 335 to 350; these read SSTSTNTSFS, KTQSSFESESSSFSKL, and SNSSTSTITKTNTMTN. A compositionally biased stretch (basic residues) spans 374-385; that stretch reads KLFKSPRTRAKN. The span at 392 to 410 shows a compositional bias: polar residues; sequence EGSSPIRSATNSLDFSGEN.

In Saccharomyces cerevisiae (strain ATCC 204508 / S288c) (Baker's yeast), this protein is Protein DSF2 (DSF2).